The sequence spans 355 residues: UDP-3-O-acylglucosamine N-acyltransferase (355 aa).

Residue His246 is the Proton acceptor of the active site.

This sequence belongs to the transferase hexapeptide repeat family. LpxD subfamily. As to quaternary structure, homotrimer.

It catalyses the reaction a UDP-3-O-[(3R)-3-hydroxyacyl]-alpha-D-glucosamine + a (3R)-hydroxyacyl-[ACP] = a UDP-2-N,3-O-bis[(3R)-3-hydroxyacyl]-alpha-D-glucosamine + holo-[ACP] + H(+). It functions in the pathway bacterial outer membrane biogenesis; LPS lipid A biosynthesis. Its function is as follows. Catalyzes the N-acylation of UDP-3-O-acylglucosamine using 3-hydroxyacyl-ACP as the acyl donor. Is involved in the biosynthesis of lipid A, a phosphorylated glycolipid that anchors the lipopolysaccharide to the outer membrane of the cell. This Polaromonas naphthalenivorans (strain CJ2) protein is UDP-3-O-acylglucosamine N-acyltransferase.